The primary structure comprises 628 residues: Nuclear receptor subfamily 4 group A member 3 (628 aa).

The segment at 1-112 is activation function (AF)-1 domain; sequence MPCVQAQYSP…HHHHHHHHHH (112 aa). Residues 1-140 are required for DNA-PK heterotrimer; the sequence is MPCVQAQYSP…PSTSMYFKQS (140 aa). An interaction with NCOA1, NCOA2, NCOA3 and KAT2B region spans residues 1–293; that stretch reads MPCVQAQYSP…NRSSSSGEGT (293 aa). Disordered stretches follow at residues 96-163 and 269-290; these read HGYH…DELP and ASSL…SSSG. Residues 97 to 113 show a composition bias toward basic residues; it reads GYHHHHHHHHHHHHHHQ. Pro residues predominate over residues 142-151; the sequence is PSTPTTPGFP. The segment covering 270-289 has biased composition (low complexity); it reads SSLLGESPSLPSPPNRSSSS. A DNA-binding region (nuclear receptor) is located at residues 291 to 366; sequence EGTCAVCGDN…VGMVKEVVRT (76 aa). 2 NR C4-type zinc fingers span residues 294–314 and 330–354; these read CAVC…CEGC and CLAN…FQKC. The segment at 366 to 396 is disordered; the sequence is TDSLKGRRGRLPSKPKSPLQQEPSQPSPPSP. Residues 379-389 show a composition bias toward low complexity; that stretch reads KPKSPLQQEPS. Residues 381 to 628 are interaction with KAT2B; the sequence is KSPLQQEPSQ…DKLFLDTLPF (248 aa). The 230-residue stretch at 396 to 625 folds into the NR LBD domain; it reads PPICMMNALV…SVIDKLFLDT (230 aa).

It belongs to the nuclear hormone receptor family. NR4 subfamily. Interacts with SIX3 (via homeobox); differentially regulates the transcriptional activities of NR4A3. Interacts with NR3C1 (via nuclear receptor DNA-binding domain); the interactions represses transcription activity of NR4A3 on the POMC promoter Nur response element (NurRE). Interacts with TRIM28; the interactions potentiates NR4A3 activity on NurRE promoter. Binds DNA as a monomer and homodimer. Interacts with PARP1; activates PARP1 by improving acetylation of PARP1 and suppressing the interaction between PARP1 and SIRT1. Interacts with the constituents of DNA-PK heterotrimer PRKDC, XRCC6 and XRCC5; phosphorylates and prevents NR4A3 ubiquitinylation and degradation. Interacts with NCOA2; potentiates the activity of the NR4A3. Interacts with NCOA1, NCOA3, MED1 and KAT2B. Interacts with EP300 and NCOA2; mediates the recruitment of MED1 in the coactivator complex. Post-translationally, phosphorylated by PRKDC. Expressed at high levels in cultured apoptotic neuronal cells and fetal brain, and at low level in adult brain.

The protein localises to the nucleus. Transcriptional activator that binds to regulatory elements in promoter regions in a cell- and response element (target)-specific manner. Induces gene expression by binding as monomers to the NR4A1 response element (NBRE) 5'-AAAAGGTCA-3' site and as homodimers to the Nur response element (NurRE) site in the promoter of their regulated target genes. Plays a role in the regulation of proliferation, survival and differentiation of many different cell types and also in metabolism and inflammation. Mediates proliferation of vascular smooth muscle, myeloid progenitor cell and type B pancreatic cells; promotes mitogen-induced vascular smooth muscle cell proliferation through transactivation of SKP2 promoter by binding a NBRE site. Upon PDGF stimulation, stimulates vascular smooth muscle cell proliferation by regulating CCND1 and CCND2 expression. In islets, induces type B pancreatic cell proliferation through up-regulation of genes that activate cell cycle, as well as genes that cause degradation of the CDKN1A. Negatively regulates myeloid progenitor cell proliferation by repressing RUNX1 in a NBRE site-independent manner. During inner ear, plays a role as a key mediator of the proliferative growth phase of semicircular canal development. Also mediates survival of neuron and smooth muscle cells; mediates CREB-induced neuronal survival, and during hippocampus development, plays a critical role in pyramidal cell survival and axonal guidance. Is required for S phase entry of the cell cycle and survival of smooth muscle cells by inducing CCND1, resulting in RB1 phosphorylation. Binds to NBRE motif in CCND1 promoter, resulting in the activation of the promoter and CCND1 transcription. Also plays a role in inflammation; Upon TNF stimulation, mediates monocyte adhesion by inducing the expression of VCAM1 and ICAM1 by binding to the NBRE consensus site. In mast cells activated by Fc-epsilon receptor cross-linking, promotes the synthesis and release of cytokines but impairs events leading to degranulation. Also plays a role in metabolism; by modulating feeding behavior; and by playing a role in energy balance by inhibiting the glucocorticoid-induced orexigenic neuropeptides AGRP expression, at least in part by forming a complex with activated NR3C1 on the AGRP-glucocorticoid response element (GRE), and thus weakening the DNA binding activity of NR3C1. Upon catecholamines stimulation, regulates gene expression that controls oxidative metabolism in skeletal muscle. Plays a role in glucose transport by regulating translocation of the SLC2A4 glucose transporter to the cell surface. Finally, during gastrulation plays a crucial role in the formation of anterior mesoderm by controlling cell migration. Also participates in cardiac hypertrophy by activating PARP1. In Rattus norvegicus (Rat), this protein is Nuclear receptor subfamily 4 group A member 3 (Nr4a3).